The chain runs to 307 residues: Oxygen-dependent coproporphyrinogen-III oxidase (307 aa).

Ser97 contacts substrate. Residues His101 and His111 each coordinate a divalent metal cation. Residue His111 is the Proton donor of the active site. 113–115 (NVR) contacts substrate. Residues His152 and His182 each coordinate a divalent metal cation. The important for dimerization stretch occupies residues 247-282 (YVEFNLVWDRGTHFGLQSGGRTESILMSMPPLASWS). Position 265-267 (265-267 (GGR)) interacts with substrate.

It belongs to the aerobic coproporphyrinogen-III oxidase family. Homodimer. It depends on a divalent metal cation as a cofactor.

Its subcellular location is the cytoplasm. The catalysed reaction is coproporphyrinogen III + O2 + 2 H(+) = protoporphyrinogen IX + 2 CO2 + 2 H2O. Its pathway is porphyrin-containing compound metabolism; protoporphyrin-IX biosynthesis; protoporphyrinogen-IX from coproporphyrinogen-III (O2 route): step 1/1. Functionally, involved in the heme biosynthesis. Catalyzes the aerobic oxidative decarboxylation of propionate groups of rings A and B of coproporphyrinogen-III to yield the vinyl groups in protoporphyrinogen-IX. The protein is Oxygen-dependent coproporphyrinogen-III oxidase of Polaromonas naphthalenivorans (strain CJ2).